The following is a 322-amino-acid chain: Cytochrome c biogenesis protein CcsA (322 aa).

A run of 8 helical transmembrane segments spans residues 9–29 (ILTH…LITL), 44–64 (GMIA…IYSG), 71–91 (LYES…VPYF), 98–118 (LTTI…SGLL), 143–163 (MILS…LLVI), 226–246 (VISL…VWAN), 253–273 (WSWD…AIYL), and 287–307 (AIVA…VNLL).

It belongs to the CcmF/CycK/Ccl1/NrfE/CcsA family. In terms of assembly, may interact with Ccs1.

It localises to the plastid. Its subcellular location is the chloroplast thylakoid membrane. Required during biogenesis of c-type cytochromes (cytochrome c6 and cytochrome f) at the step of heme attachment. This is Cytochrome c biogenesis protein CcsA from Helianthus annuus (Common sunflower).